The primary structure comprises 964 residues: uncharacterized protein (964 aa).

Disordered regions lie at residues 1 to 31 (MDSETDTDTHSICNSVSSGENYKSPESSDCE) and 169 to 199 (EETYSEEDERQTPIQMENATSEVSSSEDEIS). The span at 10 to 27 (HSICNSVSSGENYKSPES) shows a compositional bias: polar residues. A coiled-coil region spans residues 656–840 (EVMESLQVEI…LILNQTSMAK (185 aa)).

This is an uncharacterized protein from Caenorhabditis elegans.